A 595-amino-acid polypeptide reads, in one-letter code: Merlin (595 aa).

Ser-13 carries the post-translational modification Phosphoserine. An FERM domain is found at 22-311; the sequence is FTVRIVTMDA…GNHDLFMRRR (290 aa). Ser-518 carries the post-translational modification Phosphoserine; by PAK.

In terms of assembly, interacts with NHERF1, HGS and AGAP2. Interacts with SGSM3. Interacts (via FERM domain) with MPP1. Interacts with LAYN and WWC1. Interacts with the CUL4A-RBX1-DDB1-VprBP/DCAF1 E3 ubiquitin-protein ligase complex. The unphosphorylated form interacts (via FERM domain) with VPRBP/DCAF1. Interacts (via FERM domain) with NOP53; the interaction is direct. Interacts with SCHIP1; the interaction is direct. Post-translationally, phosphorylation of Ser-518 inhibits nuclear localization by disrupting the intramolecular association of the FERM domain with the C-terminal tail. Ubiquitinated by the CUL4A-RBX1-DDB1-DCAF1/VprBP E3 ubiquitin-protein ligase complex for ubiquitination and subsequent proteasome-dependent degradation. In terms of processing, phosphorylation of Ser-518 inhibits nuclear localization by disrupting the intramolecular association of the FERM domain with the C-terminal tail. The dephosphorylation of Ser-518 favors the interaction with NOP53.

The protein localises to the cell membrane. It localises to the cell projection. It is found in the cytoplasm. The protein resides in the cytoskeleton. Its subcellular location is the nucleus. Its function is as follows. Probable regulator of the Hippo/SWH (Sav/Wts/Hpo) signaling pathway, a signaling pathway that plays a pivotal role in tumor suppression by restricting proliferation and promoting apoptosis. Along with WWC1 can synergistically induce the phosphorylation of LATS1 and LATS2 and can probably function in the regulation of the Hippo/SWH (Sav/Wts/Hpo) signaling pathway. May act as a membrane stabilizing protein. May inhibit PI3 kinase by binding to AGAP2 and impairing its stimulating activity. Suppresses cell proliferation and tumorigenesis by inhibiting the CUL4A-RBX1-DDB1-VprBP/DCAF1 E3 ubiquitin-protein ligase complex. This chain is Merlin (NF2), found in Papio anubis (Olive baboon).